A 173-amino-acid chain; its full sequence is Photosystem I assembly protein Ycf3 (173 aa).

3 TPR repeats span residues 35-68, 72-105, and 120-153; these read AFVY…EEDT, GYIL…NPRL, and GEKA…APNN.

It belongs to the Ycf3 family.

The protein localises to the cellular thylakoid membrane. Functionally, essential for the assembly of the photosystem I (PSI) complex. May act as a chaperone-like factor to guide the assembly of the PSI subunits. This chain is Photosystem I assembly protein Ycf3, found in Trichormus variabilis (strain ATCC 29413 / PCC 7937) (Anabaena variabilis).